Reading from the N-terminus, the 118-residue chain is Small ribosomal subunit protein uS13 (118 aa).

Positions 94–118 (SLPLRGQRTKTNARTRKGPRKPIKK) are disordered.

Belongs to the universal ribosomal protein uS13 family. Part of the 30S ribosomal subunit. Forms a loose heterodimer with protein S19. Forms two bridges to the 50S subunit in the 70S ribosome.

In terms of biological role, located at the top of the head of the 30S subunit, it contacts several helices of the 16S rRNA. In the 70S ribosome it contacts the 23S rRNA (bridge B1a) and protein L5 of the 50S subunit (bridge B1b), connecting the 2 subunits; these bridges are implicated in subunit movement. Contacts the tRNAs in the A and P-sites. The polypeptide is Small ribosomal subunit protein uS13 (Alteromonas mediterranea (strain DSM 17117 / CIP 110805 / LMG 28347 / Deep ecotype)).